Reading from the N-terminus, the 74-residue chain is MKTFMIILLVICSILIVGRVEANDNKRKYLLLDPCLRPNAPPGCHRQPYKPRTPVNVYSRGCTTINRCRRVQNP.

A signal peptide spans 1–22 (MKTFMIILLVICSILIVGRVEA). 2 cysteine pairs are disulfide-bonded: C35–C44 and C62–C68.

This sequence belongs to the plant rapid alkalinization factor (RALF) family.

The protein localises to the secreted. Cell signaling peptide that may regulate plant stress, growth, and development. Mediates a rapid alkalinization of extracellular space by mediating a transient increase in the cytoplasmic Ca(2+) concentration leading to a calcium-dependent signaling events through a cell surface receptor and a concomitant activation of some intracellular mitogen-activated protein kinases. This is Protein RALF-like 25 (RALFL25) from Arabidopsis thaliana (Mouse-ear cress).